The chain runs to 533 residues: Sterol 26-hydroxylase, mitochondrial (533 aa).

A mitochondrion-targeting transit peptide spans M1–A32. The segment at I34–A60 is disordered. N6-acetyllysine occurs at positions 142, 232, 285, 296, and 375. A sterol-binding region spans residues P386 to P400. C479 contacts heme. N6-acetyllysine is present on residues K512 and K523.

It belongs to the cytochrome P450 family. As to quaternary structure, interacts with HSP70; this interaction is required for initial targeting to mitochondria. Requires heme as cofactor. Post-translationally, acetylation of Lys-125 and Lys-285 is observed in liver mitochondria from fasted mice but not from fed mice. In terms of tissue distribution, expressed in the gray and white matter of cerebellum (at protein level).

It localises to the mitochondrion inner membrane. The catalysed reaction is 5beta-cholestane-3alpha,7alpha,12alpha-triol + 6 reduced [adrenodoxin] + 3 O2 + 5 H(+) = (25R)-3alpha,7alpha,12alpha-trihydroxy-5beta-cholestan-26-oate + 6 oxidized [adrenodoxin] + 4 H2O. It catalyses the reaction cholestanol + 2 reduced [adrenodoxin] + O2 + 2 H(+) = (25R)-26-hydroxycholestanol + 2 oxidized [adrenodoxin] + H2O. The enzyme catalyses (25R)-3beta-hydroxycholest-5-en-7-one-26-al + 2 reduced [adrenodoxin] + O2 + H(+) = (25R)-3beta-hydroxycholest-5-en-7-one-26-oate + 2 oxidized [adrenodoxin] + H2O. It carries out the reaction (25R)-3beta,26-dihydroxycholest-5-en-7-one + 2 reduced [adrenodoxin] + O2 + 2 H(+) = (25R)-3beta-hydroxycholest-5-en-7-one-26-al + 2 oxidized [adrenodoxin] + 2 H2O. The catalysed reaction is 7-oxocholesterol + 2 reduced [adrenodoxin] + O2 + 2 H(+) = (25R)-3beta,26-dihydroxycholest-5-en-7-one + 2 oxidized [adrenodoxin] + H2O. It catalyses the reaction calciol + 2 reduced [adrenodoxin] + O2 + 2 H(+) = calcidiol + 2 oxidized [adrenodoxin] + H2O. The enzyme catalyses (25R)-5beta-cholestane-3alpha,7alpha,12alpha,26-tetrol + 2 reduced [adrenodoxin] + O2 + 2 H(+) = (25R)-3alpha,7alpha,12alpha-trihydroxy-5beta-cholestan-26-al + 2 oxidized [adrenodoxin] + 2 H2O. It carries out the reaction 2 reduced [adrenodoxin] + cholesterol + O2 + 2 H(+) = (25R)-cholest-5-ene-3beta,26-diol + 2 oxidized [adrenodoxin] + H2O. The catalysed reaction is (25R)-3beta,4beta-dihydroxycholest-5-en-26-al + 2 reduced [adrenodoxin] + O2 + H(+) = (25R)-3beta,4beta-dihydroxycholest-5-en-26-oate + 2 oxidized [adrenodoxin] + H2O. It catalyses the reaction (25R)-4beta,26-dihydroxycholesterol + 2 reduced [adrenodoxin] + O2 + 2 H(+) = (25R)-3beta,4beta-dihydroxycholest-5-en-26-al + 2 oxidized [adrenodoxin] + 2 H2O. The enzyme catalyses 4beta-hydroxycholesterol + 2 reduced [adrenodoxin] + O2 + 2 H(+) = (25R)-4beta,26-dihydroxycholesterol + 2 oxidized [adrenodoxin] + H2O. It carries out the reaction (25R)-3beta-hydroxy-5-cholesten-26-al + 2 reduced [adrenodoxin] + O2 + H(+) = (25R)-3beta-hydroxy-5-cholestenoate + 2 oxidized [adrenodoxin] + H2O. The catalysed reaction is (25R)-cholest-5-ene-3beta,26-diol + 2 reduced [adrenodoxin] + O2 + 2 H(+) = (25R)-3beta-hydroxy-5-cholesten-26-al + 2 oxidized [adrenodoxin] + 2 H2O. It catalyses the reaction (25R)-3alpha,7alpha,12alpha-trihydroxy-5beta-cholestan-26-al + 2 reduced [adrenodoxin] + O2 + H(+) = (25R)-3alpha,7alpha,12alpha-trihydroxy-5beta-cholestan-26-oate + 2 oxidized [adrenodoxin] + H2O. The enzyme catalyses 5beta-cholestane-3alpha,7alpha,12alpha-triol + 2 reduced [adrenodoxin] + O2 + 2 H(+) = (25R)-5beta-cholestane-3alpha,7alpha,12alpha,26-tetrol + 2 oxidized [adrenodoxin] + H2O. Its pathway is hormone biosynthesis; cholecalciferol biosynthesis. It participates in steroid metabolism; cholesterol degradation. It functions in the pathway lipid metabolism; bile acid biosynthesis. In terms of biological role, cytochrome P450 monooxygenase that catalyzes regio- and stereospecific hydroxylation of cholesterol and its derivatives. Hydroxylates (with R stereochemistry) the terminal methyl group of cholesterol side-chain in a three step reaction to yield at first a C26 alcohol, then a C26 aldehyde and finally a C26 acid. Regulates cholesterol homeostasis by catalyzing the conversion of excess cholesterol to bile acids via both the 'neutral' (classic) and the 'acid' (alternative) pathways. May also regulate cholesterol homeostasis via generation of active oxysterols, which act as ligands for NR1H2 and NR1H3 nuclear receptors, modulating the transcription of genes involved in lipid metabolism. Plays a role in cholestanol metabolism in the cerebellum. Similarly to cholesterol, hydroxylates cholestanol and may facilitate sterol diffusion through the blood-brain barrier to the systemic circulation for further degradation. Also hydroxylates retinal 7-ketocholesterol, a noxious oxysterol with pro-inflammatory and pro-apoptotic effects, and may play a role in its elimination from the retinal pigment epithelium. May play a redundant role in vitamin D biosynthesis. Catalyzes 25-hydroxylation of vitamin D3 that is required for its conversion to a functionally active form. The polypeptide is Sterol 26-hydroxylase, mitochondrial (Mus musculus (Mouse)).